The primary structure comprises 313 residues: Protoheme IX farnesyltransferase (313 aa).

The next 9 membrane-spanning stretches (helical) occupy residues 22-42 (FALL…VGLM), 46-66 (IGVH…GGGA), 98-118 (GEAL…LALA), 121-141 (VFAG…YTMW), 150-170 (IVIG…AATG), 177-197 (WLMF…LALF), 223-243 (ILVY…TSVG), 246-266 (IYLT…VQIW), and 284-304 (FFKL…AEAL).

The protein belongs to the UbiA prenyltransferase family. Protoheme IX farnesyltransferase subfamily. Interacts with CtaA.

It is found in the cell inner membrane. The enzyme catalyses heme b + (2E,6E)-farnesyl diphosphate + H2O = Fe(II)-heme o + diphosphate. The protein operates within porphyrin-containing compound metabolism; heme O biosynthesis; heme O from protoheme: step 1/1. Converts heme B (protoheme IX) to heme O by substitution of the vinyl group on carbon 2 of heme B porphyrin ring with a hydroxyethyl farnesyl side group. This chain is Protoheme IX farnesyltransferase, found in Ruegeria sp. (strain TM1040) (Silicibacter sp.).